We begin with the raw amino-acid sequence, 155 residues long: MKTPKMNVESFNLDHTKVKAPYVRVADRKKGVNGDVIVKYDVRFKQPNQDHMDMPSLHSLEHLVAEIIRNHANYVVDWSPMGCQTGFYLTVLNHDNYTEVLEVLEKTMQDVLKATEVPASNEKQCGWAANHTLEGAKNLARAFLDKRAEWSEVGV.

3 residues coordinate Fe cation: H58, H62, and C125.

The protein belongs to the LuxS family. In terms of assembly, homodimer. Requires Fe cation as cofactor.

The catalysed reaction is S-(5-deoxy-D-ribos-5-yl)-L-homocysteine = (S)-4,5-dihydroxypentane-2,3-dione + L-homocysteine. Functionally, involved in the synthesis of autoinducer 2 (AI-2) which is secreted by bacteria and is used to communicate both the cell density and the metabolic potential of the environment. The regulation of gene expression in response to changes in cell density is called quorum sensing. Catalyzes the transformation of S-ribosylhomocysteine (RHC) to homocysteine (HC) and 4,5-dihydroxy-2,3-pentadione (DPD). In Helicobacter pylori (strain P12), this protein is S-ribosylhomocysteine lyase.